The chain runs to 514 residues: Ammonium transporter 1 member 2 (514 aa).

Helical transmembrane passes span 56–76, 91–111, 140–160, 165–185, 212–232, 257–277, 291–313, 328–348, 351–371, 380–400, and 431–451; these read LLFSAYLVFAMQLGFAMLCAG, VLDAAAGAISYYLFGFAFAFG, FFLYQWAFAIAAAGITSGSIA, FVAYLIYSTFLTGFVYPTVSH, FAGSGVVHMVGGIAGLCGALV, VVLGTFLLWFGWYGFNPGSFL, GQWSAVGRTAVTTTLSGCTAALT, IDVCNGLLGGFAAITSGCAVV, WAAIVCGFVASWVLIGFNLLA, LEAAQLHGGCGAWGLIFTGLF, and IVQIIVIVGWVTVTMGPLFYG. Threonine 472 is subject to Phosphothreonine.

The protein belongs to the ammonia transporter channel (TC 1.A.11.2) family. In terms of tissue distribution, high expression in root.

It localises to the membrane. Ammonium transporter probably involved in ammonium uptake from the soil. This is Ammonium transporter 1 member 2 (AMT1-2) from Arabidopsis thaliana (Mouse-ear cress).